A 266-amino-acid chain; its full sequence is MQTDNTKSNTNKTAKQEWWSCAFVICIALLIRILIMEPFTVPTGSMKATILENDYIFSTKYSYGYSNYSLSFFDFIPLFKGRIFAREPERGDIVVFRPPNDMNVRYIKRLIGLPGDKIQLIDDVIYINDKKIERTEVGTYTSEDGIKYLKFKETLPNGRTYFSYKLAPIFSVIYNDRYGNTDVFYVPEGKYFFLGDNRDQSNDSRVNLGFVPFENFIAKAQFIWFSTKINWWDNDIGVMNLVLRLKPWIESVRLNRIFRNLYNTDE.

Over 1–20 (MQTDNTKSNTNKTAKQEWWS) the chain is Cytoplasmic. The helical transmembrane segment at 21 to 41 (CAFVICIALLIRILIMEPFTV) threads the bilayer. Residues 42–266 (PTGSMKATIL…IFRNLYNTDE (225 aa)) lie on the Periplasmic side of the membrane. Residues serine 45 and lysine 108 contribute to the active site.

It belongs to the peptidase S26 family.

It localises to the cell inner membrane. It carries out the reaction Cleavage of hydrophobic, N-terminal signal or leader sequences from secreted and periplasmic proteins.. The protein is Signal peptidase I (lepB) of Rickettsia akari (strain Hartford).